The primary structure comprises 321 residues: Major immediate early protein (321 aa).

The RING-type zinc-finger motif lies at 86 to 139 (CSVCLETYSQQSNDTCPFLIPTTCDHGFCFKCVINLQSNAMNIPHSTVCCPLCN). Positions 228 to 249 (LIEENTRLNEQIQELQHQVRTL) are leucine-zipper.

It is found in the host nucleus. Plays some regulatory role in both viral DNA replication and transcriptional transactivation. The protein is Major immediate early protein (PE38) of Lepidoptera (butterflies and moths).